We begin with the raw amino-acid sequence, 227 residues long: Ribonuclease 3 (227 aa).

The RNase III domain occupies 3-130 (TNAISKIIKY…LIGAIYLDGG (128 aa)). Glutamate 43 serves as a coordination point for Mg(2+). Residue aspartate 47 is part of the active site. Residues asparagine 116 and glutamate 119 each contribute to the Mg(2+) site. Glutamate 119 is an active-site residue. Residues 155-224 (DAKTILQEWA…ASLMLAKINY (70 aa)) form the DRBM domain.

Belongs to the ribonuclease III family. In terms of assembly, homodimer. It depends on Mg(2+) as a cofactor.

The protein resides in the cytoplasm. The catalysed reaction is Endonucleolytic cleavage to 5'-phosphomonoester.. Functionally, digests double-stranded RNA. Involved in the processing of primary rRNA transcript to yield the immediate precursors to the large and small rRNAs (23S and 16S). Processes some mRNAs, and tRNAs when they are encoded in the rRNA operon. Processes pre-crRNA and tracrRNA of type II CRISPR loci if present in the organism. The polypeptide is Ribonuclease 3 (Ehrlichia ruminantium (strain Gardel)).